A 78-amino-acid chain; its full sequence is Large ribosomal subunit protein bL28 (78 aa).

The protein belongs to the bacterial ribosomal protein bL28 family.

In Synechococcus sp. (strain CC9311), this protein is Large ribosomal subunit protein bL28.